We begin with the raw amino-acid sequence, 531 residues long: MAAVKTLNPKAEVARAQAALAVNISAARGLQDVLRTNLGPKGTMKMLVSGAGDIKLTKDGNVLLHEMQIQHPTASLIAKVATAQDDITGDGTTSNVLIIGELLKQADLYISEGLHPRIITEGFEAAKEKALQFLEEVKVSREMDRETLIDVARTSLRTKVHAELADVLTEAVVDSILAIKKQDEPIDLFMIEIMEMKHKSETDTSLIRGLVLDHGARHPDMKKRVEDAYILTCNVSLEYEKTEVNSGFFYKSAEEREKLVKAERKFIEDRVKKIIELKRKVCGDSDKGFVVINQKGIDPFSLDALSKEGIVALRRAKRRNMERLTLACGGVALNSFDDLSPDQLGHAGLVYEYTLGEEKFTFIEKCNNPRSVTLLIKGPNKHTLTQIKDAVRDGLRAVRNAIDDGCVVPGAGAVEVAMAEALIKHKPSVKGRAQLGVQAFADALLIIPKVLAQNSGFDLQETLVKIQAEHSESGQLVGVDLNTGEPMVAAEVGVWDNYCVKKQLLHSCTVIATNILLVDEIMRAGMSSLKG.

Position 2 is an N-acetylalanine (Ala-2). At Lys-5 the chain carries N6-acetyllysine. Gly-39 serves as a coordination point for ADP. Gly-39 lines the ATP pocket. A Mg(2+)-binding site is contributed by Asp-90. ADP is bound by residues Gly-91, Thr-92, Thr-93, Ser-94, Thr-158, and Lys-159. The ATP site is built by Gly-91, Thr-92, and Thr-93. The residue at position 199 (Lys-199) is an N6-acetyllysine. Ser-205 bears the Phosphoserine mark. Lys-251 is covalently cross-linked (Glycyl lysine isopeptide (Lys-Gly) (interchain with G-Cter in SUMO2)). An N6-acetyllysine mark is found at Lys-287, Lys-365, Lys-377, and Lys-388. An ADP-binding site is contributed by Ala-411. Positions 411, 412, 496, and 501 each coordinate ATP. Asp-496 contacts ADP.

Belongs to the TCP-1 chaperonin family. Component of the chaperonin-containing T-complex (TRiC), a hexadecamer composed of two identical back-to-back stacked rings enclosing a protein folding chamber. Each ring is made up of eight different subunits: TCP1/CCT1, CCT2, CCT3, CCT4, CCT5, CCT6A/CCT6, CCT7, CCT8. Interacts with PACRG.

Its subcellular location is the cytoplasm. The catalysed reaction is ATP + H2O = ADP + phosphate + H(+). Functionally, component of the chaperonin-containing T-complex (TRiC), a molecular chaperone complex that assists the folding of actin, tubulin and other proteins upon ATP hydrolysis. The TRiC complex mediates the folding of WRAP53/TCAB1, thereby regulating telomere maintenance. This chain is T-complex protein 1 subunit zeta (CCT6), found in Pongo abelii (Sumatran orangutan).